The sequence spans 51 residues: Large ribosomal subunit protein eL39 (51 aa).

It belongs to the eukaryotic ribosomal protein eL39 family.

This is Large ribosomal subunit protein eL39 (RpL39) from Drosophila melanogaster (Fruit fly).